We begin with the raw amino-acid sequence, 630 residues long: MDFPSRFEVIVIGGGHAGTEAALASARMGVKTLLLTHNVETLGHMSCNPAIGGIGKSHLVKEIDALGGAMALATDKSGIQFRVLNNRKGPAVRATRAQADRAIYKAVVREILENQPNLWIFQQSCDDLIVEQDQVKGVVTQMGLRFFAESVVLTTGTFLGGLIHIGLQNHSGGRAGDPPSIALAHRMRELPLRVGRLKTGTPPRIDGRSVDFSVMTEQPGDTPIPVMSFMGNAEMHPRQVSCWITHTNARTHEIIASNLDRSPMYSGVIEGVGPRYCPSIEDKIHRFADKDSHQVFIEPEGLTTHELYPNGISTSLPFDVQLELVRSIRGMENAHIVRPGYAIEYDYFDPRDLKYSLETKVIGGLFFAGQINGTTGYEEAGAQGLLAGTNAALRAQGRDSWCPRRDEAYIGVLVDDLITLGTQEPYRMFTSRAEYRLILREDNADLRLTEKGRELGLIDDQRWAAFCAKRDGIEREEQRLKSTWVRPNTEQGQAIVDKFGTPLSHEYSLLNLLARPEIDYAGLIEATGGEAIDPQVAEQVEIRTKYAGYIDRQQDEIARLRASEDTRLPVDIDYSTISGLSKEIQGKLGQTRPETLGQASRIPGVTPAAISLLLIHLKKRGAGRELEQSA.

An FAD-binding site is contributed by 13–18 (GGGHAG). 273 to 287 (GPRYCPSIEDKIHRF) contacts NAD(+).

It belongs to the MnmG family. In terms of assembly, homodimer. Heterotetramer of two MnmE and two MnmG subunits. The cofactor is FAD.

Its subcellular location is the cytoplasm. Functionally, NAD-binding protein involved in the addition of a carboxymethylaminomethyl (cmnm) group at the wobble position (U34) of certain tRNAs, forming tRNA-cmnm(5)s(2)U34. This is tRNA uridine 5-carboxymethylaminomethyl modification enzyme MnmG from Pseudomonas putida (strain GB-1).